The chain runs to 396 residues: Beta-1,3-N-acetylglucosaminyltransferase radical fringe (396 aa).

Over 1–6 (MNFSCL) the chain is Cytoplasmic. A helical; Signal-anchor for type II membrane protein membrane pass occupies residues 7–27 (GLSKICFLVSVIFCTFLLLFI). The Lumenal segment spans residues 28–396 (PKTKTPWRPR…THWCPPRKTR (369 aa)). Residues N49 and N120 are each glycosylated (N-linked (GlcNAc...) asparagine). Residue R145 coordinates substrate. N184 carries N-linked (GlcNAc...) asparagine glycosylation. Intrachain disulfides connect C185–C196 and C214–C277. Residue D218 coordinates substrate. Position 219 (D219) interacts with Mn(2+). Residue D307 is part of the active site. H331 lines the Mn(2+) pocket. An intrachain disulfide couples C381 to C390.

It belongs to the glycosyltransferase 31 family. Requires Mn(2+) as cofactor. In terms of tissue distribution, detected in the mesanchymal region of the developing limb. Expressed in mesoderm but not in ectoderm with no evident boundary of expression.

It is found in the golgi apparatus membrane. The enzyme catalyses 3-O-(alpha-L-fucosyl)-L-threonyl-[EGF-like domain protein] + UDP-N-acetyl-alpha-D-glucosamine = 3-O-(N-acetyl-beta-D-glucosaminyl-(1-&gt;3)-alpha-L-fucosyl)-L-threonyl-[EGF-like domain protein] + UDP + H(+). It catalyses the reaction 3-O-(alpha-L-fucosyl)-L-seryl-[EGF-like domain protein] + UDP-N-acetyl-alpha-D-glucosamine = 3-O-(N-acetyl-beta-D-glucosaminyl-(1-&gt;3)-alpha-L-fucosyl)-L-seryl-[EGF-like domain protein] + UDP + H(+). In terms of biological role, glycosyltransferase that initiates the elongation of O-linked fucose residues attached to EGF-like repeats in the extracellular domain of Notch molecules. Involved in forelimb development and in adult forelimb regeneration. The polypeptide is Beta-1,3-N-acetylglucosaminyltransferase radical fringe (RFNG) (Notophthalmus viridescens (Eastern newt)).